The chain runs to 899 residues: Translation initiation factor IF-2 (899 aa).

3 disordered regions span residues 116-135 (AKARAEQQAREAAEQKARLQ), 170-189 (RGGGTVKPAPKPAETLEQKK), and 262-306 (DREI…ANKH). One can recognise a tr-type G domain in the interval 399–568 (TRPPVVTIMG…LIQSELMELK (170 aa)). Residues 408-415 (GHVDHGKT) form a G1 region. Residue 408-415 (GHVDHGKT) coordinates GTP. Positions 433–437 (GITQH) are G2. The interval 454–457 (DTPG) is G3. GTP contacts are provided by residues 454 to 458 (DTPGH) and 508 to 511 (NKMD). Residues 508 to 511 (NKMD) form a G4 region. The G5 stretch occupies residues 544–546 (SAH).

Belongs to the TRAFAC class translation factor GTPase superfamily. Classic translation factor GTPase family. IF-2 subfamily.

It localises to the cytoplasm. One of the essential components for the initiation of protein synthesis. Protects formylmethionyl-tRNA from spontaneous hydrolysis and promotes its binding to the 30S ribosomal subunits. Also involved in the hydrolysis of GTP during the formation of the 70S ribosomal complex. The polypeptide is Translation initiation factor IF-2 (Acinetobacter baumannii (strain AB307-0294)).